A 301-amino-acid polypeptide reads, in one-letter code: 3-methyl-2-oxobutanoate hydroxymethyltransferase (301 aa).

Over residues 1 to 12 (MAPSNLPESTTP) the composition is skewed to polar residues. The interval 1 to 24 (MAPSNLPESTTPAEVPAPYGTGPA) is disordered. Mg(2+) is bound by residues D82 and D121. 3-methyl-2-oxobutanoate contacts are provided by residues 82–83 (DS), D121, and K151. Position 153 (E153) interacts with Mg(2+). The active-site Proton acceptor is E219.

The protein belongs to the PanB family. As to quaternary structure, homodecamer; pentamer of dimers. It depends on Mg(2+) as a cofactor.

Its subcellular location is the cytoplasm. The catalysed reaction is 3-methyl-2-oxobutanoate + (6R)-5,10-methylene-5,6,7,8-tetrahydrofolate + H2O = 2-dehydropantoate + (6S)-5,6,7,8-tetrahydrofolate. Its pathway is cofactor biosynthesis; (R)-pantothenate biosynthesis; (R)-pantoate from 3-methyl-2-oxobutanoate: step 1/2. Its function is as follows. Catalyzes the reversible reaction in which hydroxymethyl group from 5,10-methylenetetrahydrofolate is transferred onto alpha-ketoisovalerate to form ketopantoate. This is 3-methyl-2-oxobutanoate hydroxymethyltransferase from Paenarthrobacter aurescens (strain TC1).